The chain runs to 417 residues: Serine hydroxymethyltransferase 3 (417 aa).

Residues L121 and 125-127 (GHL) each bind (6S)-5,6,7,8-tetrahydrofolate. N6-(pyridoxal phosphate)lysine is present on K229. (6S)-5,6,7,8-tetrahydrofolate is bound at residue 354–356 (SPF).

The protein belongs to the SHMT family. Homodimer. It depends on pyridoxal 5'-phosphate as a cofactor.

It localises to the cytoplasm. It catalyses the reaction (6R)-5,10-methylene-5,6,7,8-tetrahydrofolate + glycine + H2O = (6S)-5,6,7,8-tetrahydrofolate + L-serine. It functions in the pathway one-carbon metabolism; tetrahydrofolate interconversion. It participates in amino-acid biosynthesis; glycine biosynthesis; glycine from L-serine: step 1/1. Catalyzes the reversible interconversion of serine and glycine with tetrahydrofolate (THF) serving as the one-carbon carrier. This reaction serves as the major source of one-carbon groups required for the biosynthesis of purines, thymidylate, methionine, and other important biomolecules. Also exhibits THF-independent aldolase activity toward beta-hydroxyamino acids, producing glycine and aldehydes, via a retro-aldol mechanism. In Pseudomonas aeruginosa (strain ATCC 15692 / DSM 22644 / CIP 104116 / JCM 14847 / LMG 12228 / 1C / PRS 101 / PAO1), this protein is Serine hydroxymethyltransferase 3.